The following is a 516-amino-acid chain: Glucose-1-phosphate adenylyltransferase large subunit 1, chloroplastic/amyloplastic (516 aa).

The transit peptide at M1–C45 directs the protein to the chloroplast.

It belongs to the bacterial/plant glucose-1-phosphate adenylyltransferase family. In terms of assembly, heterotetramer. As to expression, endosperm.

Its subcellular location is the plastid. The protein resides in the chloroplast. It localises to the amyloplast. It catalyses the reaction alpha-D-glucose 1-phosphate + ATP + H(+) = ADP-alpha-D-glucose + diphosphate. It participates in glycan biosynthesis; starch biosynthesis. Activated by 3'phosphoglycerate, inhibited by orthophosphate. Allosteric regulation. In terms of biological role, this protein plays a role in synthesis of starch. It catalyzes the synthesis of the activated glycosyl donor, ADP-glucose from Glc-1-P and ATP. This is Glucose-1-phosphate adenylyltransferase large subunit 1, chloroplastic/amyloplastic (SH2) from Zea mays (Maize).